The following is a 119-amino-acid chain: Large ribosomal subunit protein uL18 (119 aa).

Belongs to the universal ribosomal protein uL18 family. Part of the 50S ribosomal subunit; part of the 5S rRNA/L5/L18/L25 subcomplex. Contacts the 5S and 23S rRNAs.

This is one of the proteins that bind and probably mediate the attachment of the 5S RNA into the large ribosomal subunit, where it forms part of the central protuberance. This is Large ribosomal subunit protein uL18 from Tropheryma whipplei (strain TW08/27) (Whipple's bacillus).